The primary structure comprises 214 residues: Pyridoxine/pyridoxamine 5'-phosphate oxidase (214 aa).

Residues 9–12 (RREY) and K67 each bind substrate. FMN is bound by residues 62 to 67 (RTVLLK), 77 to 78 (YS), R83, K84, and Q106. 3 residues coordinate substrate: Y124, R128, and S132. FMN-binding positions include 141 to 142 (QS) and W186. Residue 192–194 (RLH) participates in substrate binding. R196 is an FMN binding site.

It belongs to the pyridoxamine 5'-phosphate oxidase family. Homodimer. The cofactor is FMN.

The catalysed reaction is pyridoxamine 5'-phosphate + O2 + H2O = pyridoxal 5'-phosphate + H2O2 + NH4(+). It catalyses the reaction pyridoxine 5'-phosphate + O2 = pyridoxal 5'-phosphate + H2O2. It functions in the pathway cofactor metabolism; pyridoxal 5'-phosphate salvage; pyridoxal 5'-phosphate from pyridoxamine 5'-phosphate: step 1/1. Its pathway is cofactor metabolism; pyridoxal 5'-phosphate salvage; pyridoxal 5'-phosphate from pyridoxine 5'-phosphate: step 1/1. In terms of biological role, catalyzes the oxidation of either pyridoxine 5'-phosphate (PNP) or pyridoxamine 5'-phosphate (PMP) into pyridoxal 5'-phosphate (PLP). This chain is Pyridoxine/pyridoxamine 5'-phosphate oxidase, found in Porphyromonas gingivalis (strain ATCC BAA-308 / W83).